A 435-amino-acid polypeptide reads, in one-letter code: Serine--tRNA ligase (435 aa).

241 to 243 contacts L-serine; that stretch reads TAE. 272–274 provides a ligand contact to ATP; the sequence is RSE. L-serine is bound at residue Glu-295. Residue 359–362 participates in ATP binding; the sequence is EISS. Ser-395 provides a ligand contact to L-serine.

The protein belongs to the class-II aminoacyl-tRNA synthetase family. Type-1 seryl-tRNA synthetase subfamily. In terms of assembly, homodimer. The tRNA molecule binds across the dimer.

It localises to the cytoplasm. The enzyme catalyses tRNA(Ser) + L-serine + ATP = L-seryl-tRNA(Ser) + AMP + diphosphate + H(+). The catalysed reaction is tRNA(Sec) + L-serine + ATP = L-seryl-tRNA(Sec) + AMP + diphosphate + H(+). The protein operates within aminoacyl-tRNA biosynthesis; selenocysteinyl-tRNA(Sec) biosynthesis; L-seryl-tRNA(Sec) from L-serine and tRNA(Sec): step 1/1. Catalyzes the attachment of serine to tRNA(Ser). Is also able to aminoacylate tRNA(Sec) with serine, to form the misacylated tRNA L-seryl-tRNA(Sec), which will be further converted into selenocysteinyl-tRNA(Sec). The sequence is that of Serine--tRNA ligase from Actinobacillus pleuropneumoniae serotype 5b (strain L20).